The primary structure comprises 123 residues: Putative membrane protein insertion efficiency factor (123 aa).

The segment at 1–23 (MGSCGGKHTGKGAPKPYSRNFTD) is disordered.

It belongs to the UPF0161 family.

It is found in the cell inner membrane. In terms of biological role, could be involved in insertion of integral membrane proteins into the membrane. This is Putative membrane protein insertion efficiency factor from Brucella abortus (strain 2308).